A 170-amino-acid polypeptide reads, in one-letter code: Small ribosomal subunit protein eS7 (170 aa).

The protein belongs to the eukaryotic ribosomal protein eS7 family. Component of the small ribosomal subunit.

The protein localises to the cytoplasm. This chain is Small ribosomal subunit protein eS7 (RPS7), found in Encephalitozoon cuniculi (strain GB-M1) (Microsporidian parasite).